The primary structure comprises 95 residues: Large ribosomal subunit protein uL23 (95 aa).

It belongs to the universal ribosomal protein uL23 family. In terms of assembly, part of the 50S ribosomal subunit. Contacts protein L29, and trigger factor when it is bound to the ribosome.

One of the early assembly proteins it binds 23S rRNA. One of the proteins that surrounds the polypeptide exit tunnel on the outside of the ribosome. Forms the main docking site for trigger factor binding to the ribosome. The polypeptide is Large ribosomal subunit protein uL23 (Leuconostoc mesenteroides subsp. mesenteroides (strain ATCC 8293 / DSM 20343 / BCRC 11652 / CCM 1803 / JCM 6124 / NCDO 523 / NBRC 100496 / NCIMB 8023 / NCTC 12954 / NRRL B-1118 / 37Y)).